The following is a 423-amino-acid chain: Site-specific recombinase Flp (423 aa).

Positions 136–422 (GNSHSKKMLK…DYLSSYINRR (287 aa)) constitute a Tyr recombinase Flp-type domain. Residue Tyr-343 is the O-(3'-phospho-DNA)-tyrosine intermediate of the active site.

This sequence belongs to the 'phage' integrase family. As to quaternary structure, homotetramer.

Its function is as follows. Part of the plasmid amplification system, which corrects any decrease in copy number caused by a rare missegregation event. Catalyzes the recombination between the large inverted repetitions of the 2-micron plasmid during plasmid replication. This recombination event changes the direction of one of the two replication forks in the bidirectionally replicating molecule, effectively resulting in multiple rounds of replication from a single initiation event. Binds specifically to the FLP recognition target (FRT) site where it induces DNA to bend. Three types of bend exist. Type I is approximately 60 degrees and results from 1 FLP molecule binding to 1 symmetry element. Type II is &gt;144 degrees and results from FLP molecules binding to symmetry elements a and b. Type III is approximately 65 degrees and results from FLP molecules binding to symmetry elements b and c. The chain is Site-specific recombinase Flp (FLP1) from Saccharomyces cerevisiae (strain ATCC 204508 / S288c) (Baker's yeast).